The sequence spans 180 residues: Protein SPMIP9 (180 aa).

Microtubule inner protein component of sperm flagellar doublet microtubules. In terms of tissue distribution, only detected after the mouse is 35 days old. Expression increases gradually from day 35 to 6 months, and remains stable after 54 days. Exclusively expressed in the epididymis and testis.

The protein resides in the nucleus. The protein localises to the cytoplasm. It is found in the cytoskeleton. Its subcellular location is the flagellum axoneme. Microtubule inner protein (MIP) part of the dynein-decorated doublet microtubules (DMTs) in flagella axoneme. This chain is Protein SPMIP9 (Spmip9), found in Mus musculus (Mouse).